The primary structure comprises 109 residues: Acylphosphatase (109 aa).

Positions 22 to 109 (RLRARVEGVV…GEFSSFDVVY (88 aa)) constitute an Acylphosphatase-like domain. Catalysis depends on residues R37 and N55.

It belongs to the acylphosphatase family.

The catalysed reaction is an acyl phosphate + H2O = a carboxylate + phosphate + H(+). This is Acylphosphatase (acyP) from Arthrobacter sp. (strain FB24).